A 129-amino-acid chain; its full sequence is MTDHLKHIGVADPQRIEKYTLRTEAENDILKIYYKKEKGDLFHRSLKVKFPRLQKQLLVDSGGAKRYENTSEIAPNLLHVLDELDKITSKETEQVDVKEKILKDLRHLERVVNNKIKEIERDLDKLSSR.

This sequence belongs to the UPF0325 family.

The chain is UPF0325 protein HCH_00487 from Hahella chejuensis (strain KCTC 2396).